A 322-amino-acid polypeptide reads, in one-letter code: Pantothenate kinase (322 aa).

Position 101 to 108 (101 to 108 (GSVAVGKS)) interacts with ATP.

The protein belongs to the prokaryotic pantothenate kinase family.

The protein resides in the cytoplasm. The catalysed reaction is (R)-pantothenate + ATP = (R)-4'-phosphopantothenate + ADP + H(+). It participates in cofactor biosynthesis; coenzyme A biosynthesis; CoA from (R)-pantothenate: step 1/5. The protein is Pantothenate kinase of Psychromonas ingrahamii (strain DSM 17664 / CCUG 51855 / 37).